A 374-amino-acid polypeptide reads, in one-letter code: MKRQRVVVKIGSSSLTDPKGGLCHDKLFDHVEAIAYLKQLGHDVILITSGAVAAGFGPLGYPARPTTIAGKQAAAAVGQSLLMQAYSSAFAQFGFTAAQLLLTRSDFYSRERFRNLFATITTLLENGAVPIINENDSVSIEELTFGDNDMLSALVAGFLHADALILLTDINGLYDANPKTNPQAKKYAFLPEITDEMIEAAGGIGSAVGTGGMRSKLLAARKALSFGVSVFIGTGSGREKLADILAGKGDGTYIGVPFPKQMQMRKQWIAYHAPVAGMITVDSGAEEALLMRGKSLLPAGVTAVSGDFHAMDVVDVVNEKGITIGRGQVYYAAADLKKVKGRPSEEARQYSYLHRPEVIHRDNWVTLRKESVSK.

K9 contributes to the ATP binding site. Residues S49, D136, and N148 each coordinate substrate. ATP is bound by residues 168-169 (TD) and 210-216 (TGGMRSK). The PUA domain occupies 276-354 (AGMITVDSGA…EEARQYSYLH (79 aa)).

This sequence belongs to the glutamate 5-kinase family.

Its subcellular location is the cytoplasm. The enzyme catalyses L-glutamate + ATP = L-glutamyl 5-phosphate + ADP. Its pathway is amino-acid biosynthesis; L-proline biosynthesis; L-glutamate 5-semialdehyde from L-glutamate: step 1/2. In terms of biological role, catalyzes the transfer of a phosphate group to glutamate to form L-glutamate 5-phosphate. The sequence is that of Glutamate 5-kinase from Geobacillus kaustophilus (strain HTA426).